A 262-amino-acid chain; its full sequence is Acyl-coenzyme A diphosphatase FITM2 (262 aa).

The Cytoplasmic segment spans residues 1-23 (MEHLERCAWVLRGTLVRAAVRRY). Residues 24–44 (LPWALAASMLAGSLLKELSPL) traverse the membrane as a helical segment. The Lumenal segment spans residues 45–57 (PESYLSNKRNVLN). Residues 58-78 (VYFVKVAWAWTFCLLLPFIAL) traverse the membrane as a helical segment. Topologically, residues 79–93 (TNYHLTGKAGLVLRR) are cytoplasmic. A helical membrane pass occupies residues 94–114 (LSTLLVGTAIWYVCTAIFSNV). Residues 115–145 (EHYTGSCYQSPALEGVRNEPLSKQQCHGQGG) are Lumenal-facing. A helical membrane pass occupies residues 146–166 (FWHGFDISGHSFLLTFCALMI). Residue histidine 155 is part of the active site. The Cytoplasmic portion of the chain corresponds to 167–185 (VEEMAVLHEVKTDRSHCLH). Residues 186–206 (VAITALVVALGFLTFIWVWMF) traverse the membrane as a helical segment. Residues 207-218 (LCTAVYFHNLSQ) lie on the Lumenal side of the membrane. The active site involves histidine 214. A helical membrane pass occupies residues 219–239 (KVFGTLFGLLGWYGTYGFWYL). The Cytoplasmic segment spans residues 240 to 262 (KSFSPGLPPQSCSSNLKQDSYKR).

Belongs to the FIT family. FIT2 subfamily.

Its subcellular location is the endoplasmic reticulum membrane. The catalysed reaction is an acyl-CoA + H2O = an acyl-4'-phosphopantetheine + adenosine 3',5'-bisphosphate + 2 H(+). The enzyme catalyses (9Z)-octadecenoyl-CoA + H2O = S-(9Z-octadecenoyl)-4'-phosphopantetheine + adenosine 3',5'-bisphosphate + 2 H(+). It carries out the reaction (5Z,8Z,11Z,14Z)-eicosatetraenoyl-CoA + H2O = S-(5Z,8Z,11Z,14Z-eicosatetraenoyl)-4'-phosphopantetheine + adenosine 3',5'-bisphosphate + 2 H(+). It catalyses the reaction hexadecanoyl-CoA + H2O = S-hexadecanoyl-4'-phosphopantetheine + adenosine 3',5'-bisphosphate + 2 H(+). Functionally, fatty acyl-coenzyme A (CoA) diphosphatase that hydrolyzes fatty acyl-CoA to yield acyl-4'-phosphopantetheine and adenosine 3',5'-bisphosphate. Preferentially hydrolyzes unsaturated long-chain acyl-CoA substrates such as oleoyl-CoA/(9Z)-octadecenoyl-CoA and arachidonoyl-CoA/(5Z,8Z,11Z,14Z)-eicosatetraenoyl-CoA in the endoplasmic reticulum (ER) lumen. This catalytic activity is required for maintaining ER structure and for lipid droplets (LDs) biogenesis, which are lipid storage organelles involved in maintaining lipid and energy homeostasis. Directly binds to diacylglycerol (DAGs) and triacylglycerol, which is also important for LD biogenesis. May support directional budding of nacent LDs from the ER into the cytosol by reducing DAG levels at sites of LD formation. Plays a role in the regulation of cell morphology and cytoskeletal organization. The sequence is that of Acyl-coenzyme A diphosphatase FITM2 from Sus scrofa (Pig).